Reading from the N-terminus, the 1921-residue chain is MEASSSGTAELPRSLSRRAPSRATTMMIDRPNEDASAMDSELVPSSLASIAPILRVANEIEKDNPRVAYLCRFHAFEKAHRMDATSSGRGVRQFKTYLLHRLEKEEEETKPQLAKNDPREIQAYYQNFYEKYIKEGETSRKPEEMARLYQIASVLYDVLKTVVPSPKVDYETRRYAEEVERKRDRYEHYNILPLYAVGTKPAIVELPEVKAAFSAVRNVRNLPRRRIHLPSNTPNEMRKARTKLNDILEWLASEFGFQRGNVANQREHIILLLANADIRKRNDEEYDELKPSTVTELMDKTFKSYYSWCKYLHSTSNLKFPDDCDKQQLQLIYISLYLLIWGEASNVRFMPECICYIFHNMANDVYGILFSNVEAVSGETYETEEVIDEESFLRTVITPIYQVIRNEAKRNKGGTASHSQWRNYDDLNEYFWSKKCFKIGWPLDLKADFFLNSDEITPQDERLNQVTYGKSKPKTNFVEVRTFWNLFRDFDRMWIFLVMAFQAMVIVGWHGSGSLGDIFDKDVFKTVLTIFITSAYLTLLQAALDIILNFNAWKNFKFSQILRYLLKFAVAFMWAVLLPIAYSKSVQRPTGVVKFFSTWTGDWKDQSFYTYAVSFYVLPNILAALLFLVPPFRRAMECSDMRPIKVIMWWAQPKLYVGRGMHEDMFSLFKYTTFWIMLLISKLAFNYYVEILPLITPTKMIMNLHIGHYQWHEFFPHATNNIGVVIAIWAPIVLVYLMDTQIWYAIFSTLFGGIHGAFSHLGEIRTLGMLRSRFESIPIAFSRTLMPSEDAKRKHADDYVDQKNITNFSQVWNEFIYSMRSEDKISDRDRDLLLVPSSSGDVSVIQWPPFLLASKIPIAVDMAKDFKGKEDAELFRKIKSDSYMYYAVIESYETLKKIIYALLEDEADRRVMNQVFLEVDMSMQQQRFIYEFRMSGLPLLSDKLEKFLSILLSDYEDQGTYKSQLINVFQDVIEIITQDLLVNGHEILERARVHSPDIKNEKKEQRFEKINIHLVRDRCWREKVIRLHLLLSVKESAINVPQNLEARRRITFFANSLFMNMPSAPRIRDMLSFSVLTPYYKEDVLYSEEDLNKENEDGISILFYLQKIYPDEWTNYLDRLKDPKLPEKDKSEFLREWVSYRGQTLARTVRGMMYYRQALELQCYQEVAGEQAEFSVFRAMASNDENQKAFLERARALADLKFTYVVSCQVYGNQKKSGDIHNRSCYTNILQLMLKYPSLRVAYVDEREETADAKSPKVFYSVLLKGGDKFDEEIYRIKLPGPPAEIGEGKPENQNHAIIFTRGEALQTIDMNQDNYFEEAFKLRNVLEEFNKERVGRRKPTILGLREHIFTGSVSSLAWFMSNQESSFVTIGQRILANPLRVRFHYGHPDIFDRIFHITRGGVSKASKVINLSEDIFGGFNSTLRGGYVTHHEYIQVGKGRDVGLNPISIFEAKVANGNGEQTLSRDVYRLGHRFDFYRMLSFYFTTIGFYFSSMLTVLTVYAFLYGRMYMVMSGLEKEILRLASPNQLEALEQALATQSIFQLGFLMVLPMVMEIGLEHGFRSAIVDFFIMQLQLASVFFTFQLGTKSHYYGRTILHGGSKYRPTGRGFVVFHAKFAENYRLYSRSHFVKGLELLLLLVVYQIYGHSYRSSNLYLYITVSMWFMVGSWLFAPFIFNPSGFEWQKTVDDWTDWKRWLGDRGGIGIPVEKSWESWWNVEQEHLKHTSIRGRILEITLALRFFIYQYGIVYQLNISQRSKSFLVYGLSWVVLLTSLLVLKMVSMGRRRFGTDFQLMFRILKALLFLGFLSVMTILFVVFKLTLTDLSASVLAFLPTGWAILLIGQVLRSPIKALGVWDSVKELGRAYENIMGLVIFAPIAVLSWFPIVSEFQARLLFNQAFSRGLQISMILAGRKDKATSSHK.

The segment at 1-23 (MEASSSGTAELPRSLSRRAPSRA) is disordered. Residues 1–492 (MEASSSGTAE…FWNLFRDFDR (492 aa)) lie on the Cytoplasmic side of the membrane. The chain crosses the membrane as a helical span at residues 493 to 513 (MWIFLVMAFQAMVIVGWHGSG). At 514–526 (SLGDIFDKDVFKT) the chain is on the extracellular side. The chain crosses the membrane as a helical span at residues 527-547 (VLTIFITSAYLTLLQAALDII). The Cytoplasmic portion of the chain corresponds to 548 to 560 (LNFNAWKNFKFSQ). A helical membrane pass occupies residues 561 to 581 (ILRYLLKFAVAFMWAVLLPIA). Residues 582–611 (YSKSVQRPTGVVKFFSTWTGDWKDQSFYTY) are Extracellular-facing. The chain crosses the membrane as a helical span at residues 612–632 (AVSFYVLPNILAALLFLVPPF). Residues 633 to 674 (RRAMECSDMRPIKVIMWWAQPKLYVGRGMHEDMFSLFKYTTF) are Cytoplasmic-facing. Residues 675–695 (WIMLLISKLAFNYYVEILPLI) form a helical membrane-spanning segment. Residues 696-721 (TPTKMIMNLHIGHYQWHEFFPHATNN) lie on the Extracellular side of the membrane. The helical transmembrane segment at 722-742 (IGVVIAIWAPIVLVYLMDTQI) threads the bilayer. Topologically, residues 743 to 1484 (WYAIFSTLFG…FDFYRMLSFY (742 aa)) are cytoplasmic. A helical transmembrane segment spans residues 1485–1505 (FTTIGFYFSSMLTVLTVYAFL). Topologically, residues 1506 to 1540 (YGRMYMVMSGLEKEILRLASPNQLEALEQALATQS) are extracellular. A helical transmembrane segment spans residues 1541–1561 (IFQLGFLMVLPMVMEIGLEHG). Residues 1562–1564 (FRS) lie on the Cytoplasmic side of the membrane. The helical transmembrane segment at 1565–1585 (AIVDFFIMQLQLASVFFTFQL) threads the bilayer. Topologically, residues 1586–1628 (GTKSHYYGRTILHGGSKYRPTGRGFVVFHAKFAENYRLYSRSH) are extracellular. Residues 1629–1649 (FVKGLELLLLLVVYQIYGHSY) traverse the membrane as a helical segment. At 1650–1655 (RSSNLY) the chain is on the cytoplasmic side. A helical transmembrane segment spans residues 1656–1676 (LYITVSMWFMVGSWLFAPFIF). At 1677–1730 (NPSGFEWQKTVDDWTDWKRWLGDRGGIGIPVEKSWESWWNVEQEHLKHTSIRGR) the chain is on the extracellular side. A helical membrane pass occupies residues 1731 to 1751 (ILEITLALRFFIYQYGIVYQL). Topologically, residues 1752 to 1759 (NISQRSKS) are cytoplasmic. The chain crosses the membrane as a helical span at residues 1760–1780 (FLVYGLSWVVLLTSLLVLKMV). Residues 1781–1796 (SMGRRRFGTDFQLMFR) lie on the Extracellular side of the membrane. The chain crosses the membrane as a helical span at residues 1797-1817 (ILKALLFLGFLSVMTILFVVF). The Cytoplasmic portion of the chain corresponds to 1818-1823 (KLTLTD). Residues 1824–1844 (LSASVLAFLPTGWAILLIGQV) traverse the membrane as a helical segment. Residues 1845–1867 (LRSPIKALGVWDSVKELGRAYEN) are Extracellular-facing. A helical membrane pass occupies residues 1868-1888 (IMGLVIFAPIAVLSWFPIVSE). The Cytoplasmic portion of the chain corresponds to 1889–1921 (FQARLLFNQAFSRGLQISMILAGRKDKATSSHK).

This sequence belongs to the glycosyltransferase 48 family.

Its subcellular location is the cell membrane. It carries out the reaction [(1-&gt;3)-beta-D-glucosyl](n) + UDP-alpha-D-glucose = [(1-&gt;3)-beta-D-glucosyl](n+1) + UDP + H(+). In terms of biological role, probably involved in callose synthesis, but not required for callose formation after wounding or pathogen attack. During plant growth and development, callose is found as a transitory component of the cell plate in dividing cells, is a major component of pollen mother cell walls and pollen tubes, and is found as a structural component of plasmodesmatal canals. The polypeptide is Putative callose synthase 6 (CALS6) (Arabidopsis thaliana (Mouse-ear cress)).